A 223-amino-acid polypeptide reads, in one-letter code: Small ribosomal subunit protein uS3 (223 aa).

Residues 39–108 (IRKFVKKKGA…VILINIVEVK (70 aa)) enclose the KH type-2 domain.

This sequence belongs to the universal ribosomal protein uS3 family. Part of the 30S ribosomal subunit. Forms a tight complex with proteins S10 and S14.

Its function is as follows. Binds the lower part of the 30S subunit head. Binds mRNA in the 70S ribosome, positioning it for translation. The protein is Small ribosomal subunit protein uS3 of Clostridium kluyveri (strain NBRC 12016).